Here is a 161-residue protein sequence, read N- to C-terminus: MVPKLFTSQICLLLLLGLLAVEGSLHVKPPQFTWAQWFETQHINMTSQQCTNAMRVINNYQRRCKNQNTFLLTTFANVVNVCGNPNMTCPSNKTRKNCHHSGSQVPLIHCNLTTPSPQNISNCRYAQTPANMFYIVACDNRDQRRDPPQYPVVPVHLDRII.

Residues 1–27 (MVPKLFTSQICLLLLLGLLAVEGSLHV) form the signal peptide. Tryptophan 34 carries C-linked (Man) tryptophan glycosylation. Histidine 42 (proton acceptor) is an active-site residue. The N-linked (GlcNAc...) asparagine glycan is linked to asparagine 44. 4 disulfide bridges follow: cysteine 50/cysteine 110, cysteine 64/cysteine 123, cysteine 82/cysteine 138, and cysteine 89/cysteine 98. Tyrosine 60 carries the post-translational modification 3'-nitrotyrosine. 65–69 (KNQNT) contacts substrate. 4 N-linked (GlcNAc...) asparagine glycosylation sites follow: asparagine 86, asparagine 92, asparagine 111, and asparagine 119. Histidine 156 acts as the Proton donor in catalysis.

This sequence belongs to the pancreatic ribonuclease family. As to quaternary structure, interacts with and forms a tight 1:1 complex with RNH1. Dimerization of two such complexes may occur.

It is found in the lysosome. Its subcellular location is the cytoplasmic granule. It carries out the reaction an [RNA] containing cytidine + H2O = an [RNA]-3'-cytidine-3'-phosphate + a 5'-hydroxy-ribonucleotide-3'-[RNA].. It catalyses the reaction an [RNA] containing uridine + H2O = an [RNA]-3'-uridine-3'-phosphate + a 5'-hydroxy-ribonucleotide-3'-[RNA].. This is a non-secretory ribonuclease. It is a pyrimidine specific nuclease with a slight preference for U. Cytotoxin and helminthotoxin. Possesses a wide variety of biological activities. This Gorilla gorilla gorilla (Western lowland gorilla) protein is Non-secretory ribonuclease (RNASE2).